The primary structure comprises 429 residues: Phosphomethylpyrimidine synthase (429 aa).

Residues N66, M95, Y124, H163, S185–G187, D226–R229, and E265 each bind substrate. H269 is a Zn(2+) binding site. Residue Y292 participates in substrate binding. Residue H333 coordinates Zn(2+). The [4Fe-4S] cluster site is built by C409, C412, and C416.

The protein belongs to the ThiC family. The cofactor is [4Fe-4S] cluster.

It catalyses the reaction 5-amino-1-(5-phospho-beta-D-ribosyl)imidazole + S-adenosyl-L-methionine = 4-amino-2-methyl-5-(phosphooxymethyl)pyrimidine + CO + 5'-deoxyadenosine + formate + L-methionine + 3 H(+). The protein operates within cofactor biosynthesis; thiamine diphosphate biosynthesis. In terms of biological role, catalyzes the synthesis of the hydroxymethylpyrimidine phosphate (HMP-P) moiety of thiamine from aminoimidazole ribotide (AIR) in a radical S-adenosyl-L-methionine (SAM)-dependent reaction. This is Phosphomethylpyrimidine synthase from Carboxydothermus hydrogenoformans (strain ATCC BAA-161 / DSM 6008 / Z-2901).